A 363-amino-acid polypeptide reads, in one-letter code: tRNA N6-adenosine threonylcarbamoyltransferase (363 aa).

Fe cation is bound by residues His121 and His125. Residues 143-147, Asp176, Gly189, and Asn287 each bind substrate; that span reads LASGG. A Fe cation-binding site is contributed by Asp315.

Belongs to the KAE1 / TsaD family. Requires Fe(2+) as cofactor.

It is found in the cytoplasm. The catalysed reaction is L-threonylcarbamoyladenylate + adenosine(37) in tRNA = N(6)-L-threonylcarbamoyladenosine(37) in tRNA + AMP + H(+). Required for the formation of a threonylcarbamoyl group on adenosine at position 37 (t(6)A37) in tRNAs that read codons beginning with adenine. Is involved in the transfer of the threonylcarbamoyl moiety of threonylcarbamoyl-AMP (TC-AMP) to the N6 group of A37, together with TsaE and TsaB. TsaD likely plays a direct catalytic role in this reaction. This Rhodopseudomonas palustris (strain HaA2) protein is tRNA N6-adenosine threonylcarbamoyltransferase.